The following is a 281-amino-acid chain: Fibrinogen-like protein 1-like protein (281 aa).

The signal sequence occupies residues M1–A33. A Fibrinogen C-terminal domain is found at T34–M246. 2 cysteine pairs are disulfide-bonded: C43–C69 and C201–C213. A compositionally biased stretch (low complexity) spans P260–P269. The segment at P260–Q281 is disordered. The segment covering I270–Q281 has biased composition (polar residues).

As to expression, expressed in smal intestine, colon and lung.

In terms of biological role, shows a cytidine deaminase activity on 2'-deoxycytidine (in vitro), however shows no RNA editing activity (in vitro). The chain is Fibrinogen-like protein 1-like protein from Gallus gallus (Chicken).